The sequence spans 184 residues: Ribosome-recycling factor (184 aa).

It belongs to the RRF family.

It localises to the cytoplasm. Its function is as follows. Responsible for the release of ribosomes from messenger RNA at the termination of protein biosynthesis. May increase the efficiency of translation by recycling ribosomes from one round of translation to another. The polypeptide is Ribosome-recycling factor (Acinetobacter baumannii (strain SDF)).